We begin with the raw amino-acid sequence, 132 residues long: ATP synthase epsilon chain, chloroplastic (132 aa).

It belongs to the ATPase epsilon chain family. F-type ATPases have 2 components, CF(1) - the catalytic core - and CF(0) - the membrane proton channel. CF(1) has five subunits: alpha(3), beta(3), gamma(1), delta(1), epsilon(1). CF(0) has three main subunits: a, b and c.

The protein resides in the plastid. Its subcellular location is the chloroplast thylakoid membrane. Its function is as follows. Produces ATP from ADP in the presence of a proton gradient across the membrane. The chain is ATP synthase epsilon chain, chloroplastic from Adiantum capillus-veneris (Maidenhair fern).